Consider the following 491-residue polypeptide: Keratin, type II microfibrillar, component 7C (491 aa).

At Cys1 the chain carries Blocked amino end (Cys). A head region spans residues 1-109 (CGFSTVGSGF…PNAQCVKQEE (109 aa)). Positions 109-420 (EKEQIKCLNN…RLLEGEEQRL (312 aa)) constitute an IF rod domain. A coil 1A region spans residues 110–144 (KEQIKCLNNRFAAFIDKVRFLEQQNKLLETKLQFF). A linker 1 region spans residues 145 to 154 (QNRQCCESNL). The coil 1B stretch occupies residues 155–255 (EPLFEGYIET…YQEEIRVLQA (101 aa)). Positions 256–272 (NISDTSVIVKMDNSRDL) are linker 12. The tract at residues 273 to 416 (NMDCIVAEIK…ATYRRLLEGE (144 aa)) is coil 2. The interval 417–491 (EQRLCEGVGA…GGGSCSLGRC (75 aa)) is tail.

It belongs to the intermediate filament family.

Its function is as follows. Wool microfibrillar keratin. The chain is Keratin, type II microfibrillar, component 7C from Ovis aries (Sheep).